Consider the following 61-residue polypeptide: Small ribosomal subunit protein uS14B (61 aa).

Residues Cys24, Cys27, Cys40, and Cys43 each contribute to the Zn(2+) site.

It belongs to the universal ribosomal protein uS14 family. Zinc-binding uS14 subfamily. In terms of assembly, part of the 30S ribosomal subunit. Contacts proteins S3 and S10. The cofactor is Zn(2+).

In terms of biological role, binds 16S rRNA, required for the assembly of 30S particles and may also be responsible for determining the conformation of the 16S rRNA at the A site. The protein is Small ribosomal subunit protein uS14B of Lactiplantibacillus plantarum (strain ATCC BAA-793 / NCIMB 8826 / WCFS1) (Lactobacillus plantarum).